The following is a 246-amino-acid chain: Bis(5'-nucleosyl)-tetraphosphatase PrpE [asymmetrical] (246 aa).

This sequence belongs to the PrpE family. Requires Ni(2+) as cofactor.

The catalysed reaction is P(1),P(4)-bis(5'-guanosyl) tetraphosphate + H2O = GMP + GTP + 2 H(+). In terms of biological role, asymmetrically hydrolyzes Ap4p to yield AMP and ATP. In Bacillus cereus (strain Q1), this protein is Bis(5'-nucleosyl)-tetraphosphatase PrpE [asymmetrical].